A 328-amino-acid polypeptide reads, in one-letter code: 4-hydroxy-2-oxoglutarate aldolase, mitochondrial (328 aa).

The transit peptide at 1-26 (MFGRTLFPARVIALGSGLFRTPLRTL) directs the protein to the mitochondrion. 76-77 (SN) lines the substrate pocket. Lys-195 functions as the Schiff-base intermediate with substrate in the catalytic mechanism. Residues Ser-197 and Gly-221 each contribute to the substrate site.

It belongs to the DapA family. Homotetramer.

It is found in the mitochondrion. The catalysed reaction is (4S)-4-hydroxy-2-oxoglutarate = glyoxylate + pyruvate. It catalyses the reaction (4R)-4-hydroxy-2-oxoglutarate = glyoxylate + pyruvate. Its activity is regulated as follows. Inhibited by divalent cations. Functionally, catalyzes the final step in the metabolic pathway of hydroxyproline. In Xenopus tropicalis (Western clawed frog), this protein is 4-hydroxy-2-oxoglutarate aldolase, mitochondrial (hoga1).